The chain runs to 449 residues: Ribosomal protein uS12 methylthiotransferase RimO (449 aa).

An MTTase N-terminal domain is found at 15 to 125 (PRISFVSLGC…VLAAVHEAVP (111 aa)). Residues Cys24, Cys60, Cys89, Cys156, Cys160, and Cys163 each coordinate [4Fe-4S] cluster. Positions 142 to 379 (LTPRHYAYLK…MRTQQKVSAR (238 aa)) constitute a Radical SAM core domain. Residues 382–448 (KRKVGTRQSV…PYDLSGTAVG (67 aa)) enclose the TRAM domain.

It belongs to the methylthiotransferase family. RimO subfamily. [4Fe-4S] cluster is required as a cofactor.

It is found in the cytoplasm. It carries out the reaction L-aspartate(89)-[ribosomal protein uS12]-hydrogen + (sulfur carrier)-SH + AH2 + 2 S-adenosyl-L-methionine = 3-methylsulfanyl-L-aspartate(89)-[ribosomal protein uS12]-hydrogen + (sulfur carrier)-H + 5'-deoxyadenosine + L-methionine + A + S-adenosyl-L-homocysteine + 2 H(+). In terms of biological role, catalyzes the methylthiolation of an aspartic acid residue of ribosomal protein uS12. The sequence is that of Ribosomal protein uS12 methylthiotransferase RimO from Xanthobacter autotrophicus (strain ATCC BAA-1158 / Py2).